Consider the following 507-residue polypeptide: Histidine ammonia-lyase (507 aa).

Residues 142–144 (ASG) constitute a cross-link (5-imidazolinone (Ala-Gly)). S143 bears the 2,3-didehydroalanine (Ser) mark.

This sequence belongs to the PAL/histidase family. Post-translationally, contains an active site 4-methylidene-imidazol-5-one (MIO), which is formed autocatalytically by cyclization and dehydration of residues Ala-Ser-Gly.

The protein localises to the cytoplasm. It catalyses the reaction L-histidine = trans-urocanate + NH4(+). Its pathway is amino-acid degradation; L-histidine degradation into L-glutamate; N-formimidoyl-L-glutamate from L-histidine: step 1/3. The polypeptide is Histidine ammonia-lyase (Maricaulis maris (strain MCS10) (Caulobacter maris)).